The chain runs to 198 residues: NAD(P)H dehydrogenase (quinone) (198 aa).

One can recognise a Flavodoxin-like domain in the interval 4 to 189 (ILVLYYSMYG…SIARYQGEYV (186 aa)). Residues 10-15 (SMYGHI) and 78-80 (TRF) contribute to the FMN site. Residue Tyr12 participates in NAD(+) binding. Residue Trp98 participates in substrate binding. FMN is bound by residues 113-118 (STGTGG) and His133.

The protein belongs to the WrbA family. It depends on FMN as a cofactor.

The catalysed reaction is a quinone + NADH + H(+) = a quinol + NAD(+). It catalyses the reaction a quinone + NADPH + H(+) = a quinol + NADP(+). The protein is NAD(P)H dehydrogenase (quinone) of Salmonella agona (strain SL483).